We begin with the raw amino-acid sequence, 118 residues long: Holo-[acyl-carrier-protein] synthase (118 aa).

Residues Asp8 and Glu58 each coordinate Mg(2+).

It belongs to the P-Pant transferase superfamily. AcpS family. Mg(2+) is required as a cofactor.

The protein localises to the cytoplasm. It carries out the reaction apo-[ACP] + CoA = holo-[ACP] + adenosine 3',5'-bisphosphate + H(+). Functionally, transfers the 4'-phosphopantetheine moiety from coenzyme A to a Ser of acyl-carrier-protein. The protein is Holo-[acyl-carrier-protein] synthase of Listeria welshimeri serovar 6b (strain ATCC 35897 / DSM 20650 / CCUG 15529 / CIP 8149 / NCTC 11857 / SLCC 5334 / V8).